Here is a 327-residue protein sequence, read N- to C-terminus: MESGSFPVINMELLQGSQRPAAMALLRDACENWGLYELLNHGISHELMNRVETVNKEHYRRFREQRFKEFASKTLDTVENVEPENLDWESTFFLRHLPTSNISQIPDLDDDCRSTMKEFALELENLAERLLDLLCEDLGLEKGYLKKVFCGGSDGLPTFGTKVSNYPPCPKPELIKGLRAHTDAGGIILLFQDDKVSGLQLLKDGEWIDVPPVRHSIVVNIGDQLEVITNGKYKSVLHRVVAQTDGNRMSIASFYNPGSDAVIFPAPALVEKEAEEKEEKKKEIYPKFVFQDYMNLYIRKKFEAKEPRFEAMKSMEIVMSSQPIPTA.

The Fe2OG dioxygenase domain maps to 157–257 (PTFGTKVSNY…RMSIASFYNP (101 aa)). Fe cation contacts are provided by His181, Asp183, and His238.

Belongs to the iron/ascorbate-dependent oxidoreductase family. It depends on Fe cation as a cofactor.

The enzyme catalyses 1-aminocyclopropane-1-carboxylate + L-ascorbate + O2 = ethene + L-dehydroascorbate + hydrogen cyanide + CO2 + 2 H2O. The protein operates within alkene biosynthesis; ethylene biosynthesis via S-adenosyl-L-methionine; ethylene from S-adenosyl-L-methionine: step 2/2. This chain is 1-aminocyclopropane-1-carboxylate oxidase 1 (ACO1), found in Doritaenopsis sp. (Moth orchid).